An 896-amino-acid chain; its full sequence is Myelin regulatory factor-like protein (896 aa).

Residues 111-403 (GLPHRTFHNC…SNPGQFENDI (293 aa)) constitute a DNA-binding region (NDT80). In terms of domain architecture, Peptidase S74 spans 449 to 557 (SDSRAKQNVQ…KLTNNLEERI (109 aa)). Positions 541-573 (GAVKQLCKLTNNLEERIEELEIWNRKLARLKRL) form a coiled coil. A helical membrane pass occupies residues 622–638 (VFQSLVITLIAVMAFCL). The span at 648-658 (APSSNLTSSQE) shows a compositional bias: polar residues. A disordered region spans residues 648–672 (APSSNLTSSQEPALPSTASPSAPNT). A compositionally biased stretch (low complexity) spans 659 to 672 (PALPSTASPSAPNT).

This sequence belongs to the MRF family.

It localises to the membrane. This chain is Myelin regulatory factor-like protein (MYRFL), found in Bos taurus (Bovine).